The primary structure comprises 382 residues: Beta-lactamase CMY-1 (382 aa).

The signal sequence occupies residues 1-23 (MQQRQSILWGAVATLMWAGLAHA). Residue serine 88 is the Acyl-ester intermediate of the active site. A beta-lactam-binding residues include serine 88, glutamine 144, tyrosine 174, asparagine 176, and asparagine 363.

Belongs to the class-C beta-lactamase family.

It catalyses the reaction a beta-lactam + H2O = a substituted beta-amino acid. Inhibited by the beta-lactamase-blocking agent sulbactam. Functionally, class C beta-lactamase which confers resistance to penicillins and cephalosporins. Has benzylpenicillin- and cefalotin-hydrolyzing activities. Has weak cefuroxime, cefotaxime, cefoxitin, imipenem and oxacillin-hydrolyzing activities. This Klebsiella pneumoniae protein is Beta-lactamase CMY-1.